We begin with the raw amino-acid sequence, 128 residues long: uncharacterized protein (128 aa).

This is an uncharacterized protein from Homo sapiens (Human).